A 285-amino-acid polypeptide reads, in one-letter code: Seipin (285 aa).

Topologically, residues 1-16 are cytoplasmic; it reads MKINVSRPLQFLQWSS. The chain crosses the membrane as a helical span at residues 17–37; sequence YIVVAFLIQLLIILPLSILIY. Over 38–244 the chain is Lumenal; that stretch reads HDFYLRLLPA…GLRNLMLRKR (207 aa). A helical membrane pass occupies residues 245–265; it reads FLSYIIGISIFHCIICVLFFI. Residues 266-285 lie on the Cytoplasmic side of the membrane; that stretch reads TGCTAFIFVRKGQEKSKKHS.

Belongs to the seipin family.

Its subcellular location is the endoplasmic reticulum membrane. In terms of biological role, involved in lipid metabolism and lipid droplet (LD) morphology, number, and size. Facilitates initiation of LD formation, and ensures that vectorial budding of LDs from the ER is directed towards the cytoplasm. The sequence is that of Seipin from Saccharomyces cerevisiae (strain ATCC 204508 / S288c) (Baker's yeast).